Here is a 177-residue protein sequence, read N- to C-terminus: uncharacterized protein (177 aa).

Positions methionine 1 to alanine 22 are cleaved as a signal peptide. The next 3 membrane-spanning stretches (helical) occupy residues valine 31 to phenylalanine 51, isoleucine 94 to valine 114, and leucine 136 to isoleucine 156.

It is found in the membrane. This is an uncharacterized protein from Saccharomyces cerevisiae (strain ATCC 204508 / S288c) (Baker's yeast).